Consider the following 368-residue polypeptide: tRNA/tmRNA (uracil-C(5))-methyltransferase (368 aa).

S-adenosyl-L-methionine-binding residues include Gln190, Tyr218, Asn223, Glu239, and Asp301. The active-site Nucleophile is the Cys326. Glu360 acts as the Proton acceptor in catalysis.

The protein belongs to the class I-like SAM-binding methyltransferase superfamily. RNA M5U methyltransferase family. TrmA subfamily.

It carries out the reaction uridine(54) in tRNA + S-adenosyl-L-methionine = 5-methyluridine(54) in tRNA + S-adenosyl-L-homocysteine + H(+). It catalyses the reaction uridine(341) in tmRNA + S-adenosyl-L-methionine = 5-methyluridine(341) in tmRNA + S-adenosyl-L-homocysteine + H(+). Functionally, dual-specificity methyltransferase that catalyzes the formation of 5-methyluridine at position 54 (m5U54) in all tRNAs, and that of position 341 (m5U341) in tmRNA (transfer-mRNA). The sequence is that of tRNA/tmRNA (uracil-C(5))-methyltransferase from Photobacterium profundum (strain SS9).